We begin with the raw amino-acid sequence, 396 residues long: Probable tRNA sulfurtransferase (396 aa).

Positions 58-169 (NQFIEKLKMV…KKNIYVFTRS (112 aa)) constitute a THUMP domain. ATP contacts are provided by residues 187-188 (LL), 212-213 (YF), Arg-269, Gly-291, and Gln-300.

Belongs to the ThiI family.

It is found in the cytoplasm. The enzyme catalyses [ThiI sulfur-carrier protein]-S-sulfanyl-L-cysteine + a uridine in tRNA + 2 reduced [2Fe-2S]-[ferredoxin] + ATP + H(+) = [ThiI sulfur-carrier protein]-L-cysteine + a 4-thiouridine in tRNA + 2 oxidized [2Fe-2S]-[ferredoxin] + AMP + diphosphate. The catalysed reaction is [ThiS sulfur-carrier protein]-C-terminal Gly-Gly-AMP + S-sulfanyl-L-cysteinyl-[cysteine desulfurase] + AH2 = [ThiS sulfur-carrier protein]-C-terminal-Gly-aminoethanethioate + L-cysteinyl-[cysteine desulfurase] + A + AMP + 2 H(+). The protein operates within cofactor biosynthesis; thiamine diphosphate biosynthesis. Functionally, catalyzes the ATP-dependent transfer of a sulfur to tRNA to produce 4-thiouridine in position 8 of tRNAs, which functions as a near-UV photosensor. Also catalyzes the transfer of sulfur to the sulfur carrier protein ThiS, forming ThiS-thiocarboxylate. This is a step in the synthesis of thiazole, in the thiamine biosynthesis pathway. The sulfur is donated as persulfide by IscS. This Halothermothrix orenii (strain H 168 / OCM 544 / DSM 9562) protein is Probable tRNA sulfurtransferase.